The following is a 487-amino-acid chain: UDP-glycosyltransferase 72E1 (487 aa).

Catalysis depends on H18, which acts as the Proton acceptor. H18 contributes to the an anthocyanidin binding site. D116 functions as the Charge relay in the catalytic mechanism. 7 residues coordinate UDP-alpha-D-glucose: A351, Q353, H368, W371, N372, S373, and E376. A391 serves as a coordination point for an anthocyanidin. 2 residues coordinate UDP-alpha-D-glucose: E392 and Q393.

This sequence belongs to the UDP-glycosyltransferase family. Interacts with SIS8. Expressed in seedlings, roots and leaves.

It is found in the nucleus. The enzyme catalyses (E)-coniferaldehyde + UDP-alpha-D-glucose = 4-O-(beta-D-glucosyl)-4-(E)-coniferyl aldehyde + UDP + H(+). It carries out the reaction (E)-sinapaldehyde + UDP-alpha-D-glucose = 4-O-(beta-D-glucosyl)-4-trans-sinapoyl aldehyde + UDP + H(+). Its function is as follows. UDP-glycosyltransferase that glucosylates coniferyl aldehyde to form coniferyl aldehyde 4-O-glucoside. Glucosylates sinapyl aldehyde to form sinapyl aldehyde 4-O-glucoside. Is not active in presence of coniferyl alcohol or sinapyl alcohol. Can glucosylate the phytotoxic xenobiotic compound 2,4,5-trichlorophenol (TCP). This is UDP-glycosyltransferase 72E1 from Arabidopsis thaliana (Mouse-ear cress).